The following is a 331-amino-acid chain: MTKIALQQDRPLDAIVLGRAGVDLYAREANTDMADISGFNKFVGGSAANIAVAISKLGGKVGFIGCVADDAFGGYVRGYMTEQGINLDGMMTDNSGSRTSVAFTEMKPNDCTVLIYRNKASDLTLKPEQVDPAYIAQSKMLVVTGTALSESPSREATLIAMEHARRSNTVVVLDVDYRPYSWRTDVDASIYYGIAAGLSDIVIGNREEFDMMETVLAPGNTDDDATADRFLRANTQVVIVKAGELGSKVYCKDGHKFQQGIFRVEVKKPFGSGDSFAGGLIWTLVNGGELEDGVKHGSAAAAINVSGNSCTEAMPTKEVLFDFIETREQDL.

Belongs to the carbohydrate kinase PfkB family.

It catalyses the reaction 5-dehydro-2-deoxy-D-gluconate + ATP = 6-phospho-5-dehydro-2-deoxy-D-gluconate + ADP + H(+). It functions in the pathway polyol metabolism; myo-inositol degradation into acetyl-CoA; acetyl-CoA from myo-inositol: step 5/7. Its function is as follows. Catalyzes the phosphorylation of 5-dehydro-2-deoxy-D-gluconate (2-deoxy-5-keto-D-gluconate or DKG) to 6-phospho-5-dehydro-2-deoxy-D-gluconate (DKGP). The polypeptide is 5-dehydro-2-deoxygluconokinase (Photobacterium profundum (strain SS9)).